The sequence spans 90 residues: Probable Fe(2+)-trafficking protein (90 aa).

It belongs to the Fe(2+)-trafficking protein family.

Could be a mediator in iron transactions between iron acquisition and iron-requiring processes, such as synthesis and/or repair of Fe-S clusters in biosynthetic enzymes. The sequence is that of Probable Fe(2+)-trafficking protein from Cupriavidus necator (strain ATCC 17699 / DSM 428 / KCTC 22496 / NCIMB 10442 / H16 / Stanier 337) (Ralstonia eutropha).